The primary structure comprises 460 residues: ATP synthase subunit beta (460 aa).

An ATP-binding site is contributed by 150–157; sequence GGAGVGKT.

This sequence belongs to the ATPase alpha/beta chains family. In terms of assembly, F-type ATPases have 2 components, CF(1) - the catalytic core - and CF(0) - the membrane proton channel. CF(1) has five subunits: alpha(3), beta(3), gamma(1), delta(1), epsilon(1). CF(0) has three main subunits: a(1), b(2) and c(9-12). The alpha and beta chains form an alternating ring which encloses part of the gamma chain. CF(1) is attached to CF(0) by a central stalk formed by the gamma and epsilon chains, while a peripheral stalk is formed by the delta and b chains.

It localises to the cell inner membrane. It carries out the reaction ATP + H2O + 4 H(+)(in) = ADP + phosphate + 5 H(+)(out). Functionally, produces ATP from ADP in the presence of a proton gradient across the membrane. The catalytic sites are hosted primarily by the beta subunits. This is ATP synthase subunit beta from Escherichia coli (strain SMS-3-5 / SECEC).